The following is a 242-amino-acid chain: Ubiquinone biosynthesis O-methyltransferase (242 aa).

4 residues coordinate S-adenosyl-L-methionine: Arg-44, Gly-64, Asp-85, and Met-129.

The protein belongs to the methyltransferase superfamily. UbiG/COQ3 family.

The enzyme catalyses a 3-demethylubiquinol + S-adenosyl-L-methionine = a ubiquinol + S-adenosyl-L-homocysteine + H(+). It catalyses the reaction a 3-(all-trans-polyprenyl)benzene-1,2-diol + S-adenosyl-L-methionine = a 2-methoxy-6-(all-trans-polyprenyl)phenol + S-adenosyl-L-homocysteine + H(+). The protein operates within cofactor biosynthesis; ubiquinone biosynthesis. Functionally, O-methyltransferase that catalyzes the 2 O-methylation steps in the ubiquinone biosynthetic pathway. This Salmonella arizonae (strain ATCC BAA-731 / CDC346-86 / RSK2980) protein is Ubiquinone biosynthesis O-methyltransferase.